The primary structure comprises 264 residues: Small ribosomal subunit protein uS2 (264 aa).

Residues 233 to 264 are disordered; sequence AQTQAGGKAEQEAPATEEAADAQTEEAATPAE.

Belongs to the universal ribosomal protein uS2 family.

This Psychrobacter arcticus (strain DSM 17307 / VKM B-2377 / 273-4) protein is Small ribosomal subunit protein uS2.